The primary structure comprises 458 residues: MNTFEILTFECETGNYHTFCPISCVAWLYQKIEDSFFLVIGTKTCGYFLQNALGVMIFAEPRYAMAELEEGDISAQLNDHEELKRLCLHIKKDRNPSVIVWIGTCTTEIIKMDLEGIAPKVETEIGIPIVVARANGLDYAFTQGEDTVLAAITHRCPEYKSWVDEEDGTEKKVLSVYSERNRDETFKSPNHPPLVLFGSVPSTVASQLDSELKRQSIRVSGWLPAQRYTELPSLGEEVYVCGVNPFLSRTATTLMRRRKCKLIGAPFPIGPDGTRAWIEKICSVFGIKPQGLEERETQIWNNLKDYLDLLRGKSVFFMGDNLLEVSLARFLIRCGMIVYEIGIPYMDKRYQAAELSLLQDTCKKMHIPMPRIVEKPDNYNQIQRMRELQPDLAITGMAHANPLEARGINTKWSVEFTFAQIHGFTNAKDVLELVTRPLRRNNSLEHLGWTNLLQPTII.

C20, C45, and C105 together coordinate [4Fe-4S] cluster.

This sequence belongs to the BchN/ChlN family. In terms of assembly, protochlorophyllide reductase is composed of three subunits; ChlL, ChlN and ChlB. Forms a heterotetramer of two ChlB and two ChlN subunits. [4Fe-4S] cluster is required as a cofactor.

The protein localises to the plastid. It is found in the chloroplast. It carries out the reaction chlorophyllide a + oxidized 2[4Fe-4S]-[ferredoxin] + 2 ADP + 2 phosphate = protochlorophyllide a + reduced 2[4Fe-4S]-[ferredoxin] + 2 ATP + 2 H2O. The protein operates within porphyrin-containing compound metabolism; chlorophyll biosynthesis (light-independent). Functionally, component of the dark-operative protochlorophyllide reductase (DPOR) that uses Mg-ATP and reduced ferredoxin to reduce ring D of protochlorophyllide (Pchlide) to form chlorophyllide a (Chlide). This reaction is light-independent. The NB-protein (ChlN-ChlB) is the catalytic component of the complex. The sequence is that of Light-independent protochlorophyllide reductase subunit N from Angiopteris evecta (Mule's foot fern).